Here is a 149-residue protein sequence, read N- to C-terminus: Large ribosomal subunit protein uL13 (149 aa).

This sequence belongs to the universal ribosomal protein uL13 family. Part of the 50S ribosomal subunit.

In terms of biological role, this protein is one of the early assembly proteins of the 50S ribosomal subunit, although it is not seen to bind rRNA by itself. It is important during the early stages of 50S assembly. The protein is Large ribosomal subunit protein uL13 of Borrelia hermsii (strain HS1 / DAH).